The chain runs to 228 residues: Latherin (228 aa).

The first 20 residues, 1–20 (MLKVSCLFVLLCGLLVPSSA), serve as a signal peptide directing secretion. A disulfide bond links C153 and C196.

It belongs to the BPI/LBP/Plunc superfamily. Plunc family. As to quaternary structure, monomer. In terms of processing, no sign of N-X-[ST] acceptor site even though reported as N-glycosylated. In terms of tissue distribution, found in sweat (at protein level).

The protein resides in the secreted. Functionally, major protein in sweat, has surfactant properties. Has a role in temperature regulation by having a capacity to make hydrophobic surfaces wettable and so can function in promoting spreading and evaporation of sweat. The chain is Latherin (LATH) from Equus caballus (Horse).